The primary structure comprises 325 residues: Tetraacyldisaccharide 4'-kinase (325 aa).

58–65 is an ATP binding site; it reads TVGGSGKT.

It belongs to the LpxK family.

The catalysed reaction is a lipid A disaccharide + ATP = a lipid IVA + ADP + H(+). It functions in the pathway glycolipid biosynthesis; lipid IV(A) biosynthesis; lipid IV(A) from (3R)-3-hydroxytetradecanoyl-[acyl-carrier-protein] and UDP-N-acetyl-alpha-D-glucosamine: step 6/6. In terms of biological role, transfers the gamma-phosphate of ATP to the 4'-position of a tetraacyldisaccharide 1-phosphate intermediate (termed DS-1-P) to form tetraacyldisaccharide 1,4'-bis-phosphate (lipid IVA). In Coxiella burnetii (strain CbuK_Q154) (Coxiella burnetii (strain Q154)), this protein is Tetraacyldisaccharide 4'-kinase.